A 977-amino-acid chain; its full sequence is Zinc finger CCCH domain-containing protein 7B (977 aa).

TPR repeat units follow at residues 1–27, 36–69, and 82–115; these read MERQ…KQEE, VQNL…ADYA, and CKLH…DSES. Ser-217 carries the post-translational modification Phosphoserine. Residues 248–256 carry the LD motif; interaction with NSP3 motif; that stretch reads STDSLDDFS. Residues Ser-364 and Ser-367 each carry the phosphoserine modification. Residues 365–403 form a disordered region; the sequence is FGSTRGSLDKPDSFMEETNSQDHRPPSGAQKPAPSPEPC. 3 consecutive C3H1-type zinc fingers follow at residues 484–508, 616–638, and 754–782; these read LCKD…HQEE, VCRH…HSFI, and PQQY…HSPE. The C2H2-type zinc finger occupies 842–866; it reads YHCWLCGKNSNSKKQWQQHIQSEKH. Residues 886–914 form a C3H1-type 4 zinc finger; the sequence is MGEFRLCDRLQKGKACPDGDKCRCAHGQE.

As to quaternary structure, (Microbial infection) Interacts (via LD motif) with rotavirus A NSP3 (via the coiled-coil region).

The protein resides in the nucleus. Its function is as follows. May be a specific regulator of miRNA biogenesis. Binds to microRNAs MIR7-1, MIR16-2 and MIR29A hairpins recognizing the 'ATA(A/T)' motif in the apical loop. The chain is Zinc finger CCCH domain-containing protein 7B (ZC3H7B) from Homo sapiens (Human).